The following is a 570-amino-acid chain: Sulfite reductase [NADPH] hemoprotein beta-component (570 aa).

Cys-434, Cys-440, Cys-479, and Cys-483 together coordinate [4Fe-4S] cluster. Cys-483 contacts siroheme.

The protein belongs to the nitrite and sulfite reductase 4Fe-4S domain family. As to quaternary structure, alpha(8)-beta(8). The alpha component is a flavoprotein, the beta component is a hemoprotein. Requires siroheme as cofactor. [4Fe-4S] cluster is required as a cofactor.

It catalyses the reaction hydrogen sulfide + 3 NADP(+) + 3 H2O = sulfite + 3 NADPH + 4 H(+). It functions in the pathway sulfur metabolism; hydrogen sulfide biosynthesis; hydrogen sulfide from sulfite (NADPH route): step 1/1. Its function is as follows. Component of the sulfite reductase complex that catalyzes the 6-electron reduction of sulfite to sulfide. This is one of several activities required for the biosynthesis of L-cysteine from sulfate. The protein is Sulfite reductase [NADPH] hemoprotein beta-component of Salmonella typhi.